Reading from the N-terminus, the 548-residue chain is Probable malate:quinone oxidoreductase (548 aa).

The interval 521–548 (DKPQAADSTPKPQLKPKPVQKEVADIAL) is disordered. The segment covering 539–548 (VQKEVADIAL) has biased composition (basic and acidic residues).

This sequence belongs to the MQO family. The cofactor is FAD.

It carries out the reaction (S)-malate + a quinone = a quinol + oxaloacetate. Its pathway is carbohydrate metabolism; tricarboxylic acid cycle; oxaloacetate from (S)-malate (quinone route): step 1/1. In Escherichia coli (strain ATCC 8739 / DSM 1576 / NBRC 3972 / NCIMB 8545 / WDCM 00012 / Crooks), this protein is Probable malate:quinone oxidoreductase.